Reading from the N-terminus, the 95-residue chain is Small ribosomal subunit protein bS18 (95 aa).

The protein belongs to the bacterial ribosomal protein bS18 family. Part of the 30S ribosomal subunit. Forms a tight heterodimer with protein bS6.

Its function is as follows. Binds as a heterodimer with protein bS6 to the central domain of the 16S rRNA, where it helps stabilize the platform of the 30S subunit. The polypeptide is Small ribosomal subunit protein bS18 (Rickettsia typhi (strain ATCC VR-144 / Wilmington)).